We begin with the raw amino-acid sequence, 659 residues long: mRNA export factor ICP27 homolog (659 aa).

Residues cysteine 130, histidine 266, cysteine 268, and cysteine 273 each coordinate Zn(2+). The CHC2-type zinc-finger motif lies at 130 to 273; it reads CMMSNGERPP…CEHACNDNAC (144 aa). Residues 317 to 659 are disordered; it reads GSFDDSRSAT…GEDGESDMTL (343 aa). Residues 324–336 are compositionally biased toward low complexity; the sequence is SATSGDGSSCSSA. The span at 354-365 shows a compositional bias: polar residues; that stretch reads SDQTDTSNNGTV. Residues 387-397 are compositionally biased toward basic and acidic residues; sequence SPLDRPNDYHY. The span at 413-427 shows a compositional bias: low complexity; the sequence is GSGSSSTEAVSTASA. The segment covering 483–499 has biased composition (basic and acidic residues); that stretch reads SPERRSSEERSSSDQRR. Residues 503-513 are compositionally biased toward polar residues; the sequence is LSRSASATSGG. Residues 553–575 show a composition bias toward low complexity; that stretch reads SRSNTPPSSPSKPDSAPAASASP. Residues 598-610 are compositionally biased toward basic and acidic residues; it reads ESVRVSERFETGD. Composition is skewed to acidic residues over residues 617–628 and 646–659; these read ETEDESDDEDDQ and SETD…DMTL.

The protein belongs to the HHV-1 ICP27 protein family.

Its subcellular location is the virion tegument. The protein resides in the virion. It is found in the host nucleus. It localises to the host cytoplasm. Its function is as follows. Immediate early (EI) protein that plays many roles during productive infection including regulation of viral gene expression and nuclear export of intronless viral RNAs. This is mRNA export factor ICP27 homolog from Elephantid herpesvirus 1 (isolate Asian elephant/Berlin/Kiba/1998) (EIHV-1).